The sequence spans 641 residues: Macrolide export ATP-binding/permease protein MacB (641 aa).

The ABC transporter domain maps to 2–236; sequence IFLKNICKNI…LTLKTMSKEK (235 aa). 34 to 41 contacts ATP; that stretch reads GQSGSGKT. The next 4 helical transmembrane spans lie at 265-285, 519-539, 571-591, and 604-624; these read ILTM…VALG, ACVA…IMLV, MICT…IFAF, and AYSV…FGFF.

The protein belongs to the ABC transporter superfamily. Macrolide exporter (TC 3.A.1.122) family. Homodimer.

It localises to the cell inner membrane. Non-canonical ABC transporter that contains transmembrane domains (TMD), which form a pore in the inner membrane, and an ATP-binding domain (NBD), which is responsible for energy generation. Confers resistance against macrolides. The protein is Macrolide export ATP-binding/permease protein MacB of Campylobacter jejuni subsp. jejuni serotype O:23/36 (strain 81-176).